Here is a 73-residue protein sequence, read N- to C-terminus: Small proline-rich protein 2G (73 aa).

The span at 1–11 (MSYQQQQCKQP) shows a compositional bias: low complexity. The interval 1-20 (MSYQQQQCKQPCQPPPVCPT) is disordered. Tandem repeats lie at residues 21–29 (PKCPEPCPP), 30–38 (PKCPEPYLP), and 39–47 (PPCPPEHCP). Positions 21 to 47 (PKCPEPCPPPKCPEPYLPPPCPPEHCP) are 3 X 9 AA approximate tandem repeats.

This sequence belongs to the cornifin (SPRR) family.

It is found in the cytoplasm. Its function is as follows. Cross-linked envelope protein of keratinocytes. It is a keratinocyte protein that first appears in the cell cytosol, but ultimately becomes cross-linked to membrane proteins by transglutaminase. All that results in the formation of an insoluble envelope beneath the plasma membrane. In Homo sapiens (Human), this protein is Small proline-rich protein 2G (SPRR2G).